Reading from the N-terminus, the 207-residue chain is Large ribosomal subunit protein uL4 (207 aa).

The segment at 44–77 (LRQGTHKTKGRSEVRGGGRKPWRQKGTGRARQGS) is disordered. Residues 60-71 (GGRKPWRQKGTG) show a composition bias toward basic residues.

The protein belongs to the universal ribosomal protein uL4 family. As to quaternary structure, part of the 50S ribosomal subunit.

Functionally, one of the primary rRNA binding proteins, this protein initially binds near the 5'-end of the 23S rRNA. It is important during the early stages of 50S assembly. It makes multiple contacts with different domains of the 23S rRNA in the assembled 50S subunit and ribosome. Forms part of the polypeptide exit tunnel. The sequence is that of Large ribosomal subunit protein uL4 from Shouchella clausii (strain KSM-K16) (Alkalihalobacillus clausii).